We begin with the raw amino-acid sequence, 348 residues long: Heat-inducible transcription repressor HrcA (348 aa).

This sequence belongs to the HrcA family.

Its function is as follows. Negative regulator of class I heat shock genes (grpE-dnaK-dnaJ and groELS operons). Prevents heat-shock induction of these operons. This is Heat-inducible transcription repressor HrcA from Chlorobium chlorochromatii (strain CaD3).